The following is a 323-amino-acid chain: tRNA dimethylallyltransferase (323 aa).

12–19 (GPTAAGKT) lines the ATP pocket. Position 14-19 (14-19 (TAAGKT)) interacts with substrate. Interaction with substrate tRNA regions lie at residues 37–40 (DSAL) and 161–165 (QRLIR).

Belongs to the IPP transferase family. In terms of assembly, monomer. Requires Mg(2+) as cofactor.

It catalyses the reaction adenosine(37) in tRNA + dimethylallyl diphosphate = N(6)-dimethylallyladenosine(37) in tRNA + diphosphate. In terms of biological role, catalyzes the transfer of a dimethylallyl group onto the adenine at position 37 in tRNAs that read codons beginning with uridine, leading to the formation of N6-(dimethylallyl)adenosine (i(6)A). The protein is tRNA dimethylallyltransferase of Pseudomonas syringae pv. tomato (strain ATCC BAA-871 / DC3000).